The chain runs to 95 residues: MKKLATLTALAGALTMAVATAAQAESKSSSTDNTATPCVGDKCVKTKAAEGKCGEGKCGADKAKSAEGKCGEGKCGADKAKSAEGKCGEGKCGSK.

Residues 1–24 constitute a signal peptide (or 21); that stretch reads MKKLATLTALAGALTMAVATAAQA. Basic and acidic residues predominate over residues 55-89; sequence EGKCGADKAKSAEGKCGEGKCGADKAKSAEGKCGE. Positions 55–95 are disordered; the sequence is EGKCGADKAKSAEGKCGEGKCGADKAKSAEGKCGEGKCGSK.

This is an uncharacterized protein from Haemophilus influenzae (strain ATCC 51907 / DSM 11121 / KW20 / Rd).